A 1119-amino-acid chain; its full sequence is MEIKRFGRIREVIPLPPLTEIQVESYKKALQADVPPEKRENVGIQAAFKETFPIEEGDKGKGGLVLDFLEYRIGDPPFSQDECREKDLTYQAPLYARLQLIHKDTGLIKEDEVFLGHLPLMTEDGSFIINGADRVIVSQIHRSPGVYFTPDPARPGRYIASIIPLPKRGPWIDLEVEASGVVTMKVNKRKFPLVLLLRVLGYDQETLVRELSAYGDLVQGLLDEAVLAMRPEEAMVRLFTLLRPGDPPKKDKALAYLFGLLADPKRYDLGEAGRYKAEEKLGVGLSGRTLVRFEDGEFKDEVFLPTLRYLFALTAGVPGHEVDDIDHLGNRRIRTVGELMADQFRVGLARLARGVRERMVMGSPDTLTPAKLVNSRPLEAALREFFSRSQLSQFKDETNPLSSLRHKRRISALGPGGLTRERAGFDVRDVHRTHYGRICPVETPEGANIGLITSLAAYARVDALGFIRTPYRRVKNGVVTEEVVYMTASEEDRYTIAQANTPLEGDRIATDRVVARRRGEPVIVAPEEVEFMDVSPKQVFSLNTNLIPFLEHDDANRALMGSNMQTQAVPLIRAQAPVVMTGLEERVVRDSLAALYAEEDGEVVKVDGTRIAVRYEDGRLVEHPLRRYARSNQGTAFDQRPRVRVGQRVKKGDLLADGPASEEGFLALGQNVLVAIMPFDGYNFEDAIVISEELLKRDFYTSIHIERYEIEARDTKLGPERITRDIPHLSEAALRDLDEEGIVRIGAEVKPGDILVGRTSFKGEQEPSPEERLLRSIFGEKARDVKDTSLRVPPGEGGIVVGRLRLRRGDPGVELKPGVREVVRVFVAQKRKLQVGDKLANRHGNKGVVAKILPVEDMPHLPDGTPVDVILNPLGVPSRMNLGQILETHLGLAGYFLGQRYISPVFDGATEPEIKELLAEAFNLYFGKRQGEGFGVDKREKEVLARAEKLGLVSPGKSPEEQLKELFDLGKVVLYDGRTGEPFEGPIVVGQMFIMKLYHMVEDKMHARSTGPYSLITQQPLGGKAQFGGQRFGEMEVWALEAYGAAHTLQEMLTIKSDDIEGRNAAYQAIIKGEDVPEPSVPESFRVLVKELQALALDVQTLDEKDNPVDIFEGLASKR.

Belongs to the RNA polymerase beta chain family. As to quaternary structure, the RNAP catalytic core consists of 2 alpha, 1 beta, 1 beta' and 1 omega subunit. When a sigma factor is associated with the core the holoenzyme is formed, which can initiate transcription.

The enzyme catalyses RNA(n) + a ribonucleoside 5'-triphosphate = RNA(n+1) + diphosphate. Its function is as follows. DNA-dependent RNA polymerase catalyzes the transcription of DNA into RNA using the four ribonucleoside triphosphates as substrates. This Thermus aquaticus protein is DNA-directed RNA polymerase subunit beta.